Consider the following 289-residue polypeptide: 3-methyl-2-oxobutanoate hydroxymethyltransferase (289 aa).

Residues D50 and D89 each coordinate Mg(2+). 3-methyl-2-oxobutanoate-binding positions include 50–51 (DS), D89, and K119. E121 contributes to the Mg(2+) binding site. The active-site Proton acceptor is the E188. The tract at residues 266 to 289 (AQHSFGMPEDEQRRWEENVSGADD) is disordered.

The protein belongs to the PanB family. Homodecamer; pentamer of dimers. It depends on Mg(2+) as a cofactor.

It is found in the cytoplasm. The catalysed reaction is 3-methyl-2-oxobutanoate + (6R)-5,10-methylene-5,6,7,8-tetrahydrofolate + H2O = 2-dehydropantoate + (6S)-5,6,7,8-tetrahydrofolate. The protein operates within cofactor biosynthesis; (R)-pantothenate biosynthesis; (R)-pantoate from 3-methyl-2-oxobutanoate: step 1/2. In terms of biological role, catalyzes the reversible reaction in which hydroxymethyl group from 5,10-methylenetetrahydrofolate is transferred onto alpha-ketoisovalerate to form ketopantoate. This is 3-methyl-2-oxobutanoate hydroxymethyltransferase from Oleidesulfovibrio alaskensis (strain ATCC BAA-1058 / DSM 17464 / G20) (Desulfovibrio alaskensis).